A 257-amino-acid polypeptide reads, in one-letter code: Acetylglutamate kinase (257 aa).

Residues 43–44 (GG), R65, and N157 contribute to the substrate site. ATP contacts are provided by residues 180-185 (DVSGIL) and 208-210 (IIT).

The protein belongs to the acetylglutamate kinase family. ArgB subfamily. As to quaternary structure, homodimer.

The protein localises to the cytoplasm. The catalysed reaction is N-acetyl-L-glutamate + ATP = N-acetyl-L-glutamyl 5-phosphate + ADP. Its pathway is amino-acid biosynthesis; L-arginine biosynthesis; N(2)-acetyl-L-ornithine from L-glutamate: step 2/4. Catalyzes the ATP-dependent phosphorylation of N-acetyl-L-glutamate. This Proteus mirabilis (strain HI4320) protein is Acetylglutamate kinase.